The sequence spans 153 residues: Histone H2B.6 (153 aa).

Composition is skewed to basic and acidic residues over residues 1 to 28 (MAPK…EKAP) and 36 to 53 (EKRL…EGKK). The segment at 1 to 60 (MAPKAEKKPAAKKPAEEEPAAEKAEKAPAGKKPKAEKRLPAGKGEKGSGEGKKAGRKKGK) is disordered. Residues Lys-7 and Lys-37 each carry the N6-acetyllysine modification. A Glycyl lysine isopeptide (Lys-Gly) (interchain with G-Cter in ubiquitin) cross-link involves residue Lys-149.

This sequence belongs to the histone H2B family. The nucleosome is a histone octamer containing two molecules each of H2A, H2B, H3 and H4 assembled in one H3-H4 heterotetramer and two H2A-H2B heterodimers. The octamer wraps approximately 147 bp of DNA. Can be acetylated to form H2BK6ac and H2BK33ac. In terms of processing, monoubiquitinated by BRE1 to form H2BK143ub1 and deubiquitinated by UBP26. Required for heterochromatic histone H3 di- and trimethylation at H3K4me. May give a specific tag for epigenetic transcriptional activation.

The protein localises to the nucleus. The protein resides in the chromosome. Core component of nucleosome. Nucleosomes wrap and compact DNA into chromatin, limiting DNA accessibility to the cellular machineries which require DNA as a template. Histones thereby play a central role in transcription regulation, DNA repair, DNA replication and chromosomal stability. DNA accessibility is regulated via a complex set of post-translational modifications of histones, also called histone code, and nucleosome remodeling. The sequence is that of Histone H2B.6 (H2B.6) from Oryza sativa subsp. indica (Rice).